The following is a 193-amino-acid chain: dTTP/UTP pyrophosphatase (193 aa).

Asp-77 serves as the catalytic Proton acceptor.

The protein belongs to the Maf family. YhdE subfamily. It depends on a divalent metal cation as a cofactor.

The protein resides in the cytoplasm. It carries out the reaction dTTP + H2O = dTMP + diphosphate + H(+). The catalysed reaction is UTP + H2O = UMP + diphosphate + H(+). Its function is as follows. Nucleoside triphosphate pyrophosphatase that hydrolyzes dTTP and UTP. May have a dual role in cell division arrest and in preventing the incorporation of modified nucleotides into cellular nucleic acids. The chain is dTTP/UTP pyrophosphatase from Parabacteroides distasonis (strain ATCC 8503 / DSM 20701 / CIP 104284 / JCM 5825 / NCTC 11152).